We begin with the raw amino-acid sequence, 644 residues long: Chaperone protein DnaK (644 aa).

Thr195 is modified (phosphothreonine; by autocatalysis). A disordered region spans residues 598-644 (KQAAPGAGAPGAGPGPEAAGGAQQAQAEPKKDEGVIDAEYVDVDEKK). Over residues 612-624 (GPEAAGGAQQAQA) the composition is skewed to low complexity. Acidic residues predominate over residues 632 to 644 (VIDAEYVDVDEKK).

Belongs to the heat shock protein 70 family.

Acts as a chaperone. This chain is Chaperone protein DnaK, found in Koribacter versatilis (strain Ellin345).